The primary structure comprises 201 residues: Beta-lactamase inhibitory protein (201 aa).

Residues 1–36 (MRTVGIGAGVRRLGRAVVMAAAVGGLVLGSAGASNA) form the signal peptide. 2 tandem repeats follow at residues 37–112 (AGVM…EKLL) and 116–201 (APTL…WDLV). Cystine bridges form between Cys66-Cys78 and Cys145-Cys167.

As to quaternary structure, interacts with E.coli beta-lactamase TEM-1; interaction inhibits hydrolysis of beta-lactam antibiotics. Interacts with K.pneumoniae beta-lactamase SHV-1. Interacts with K.pneumoniae beta-lactamases KPC-2 and KPC-3; interaction inhibits hydrolysis of beta-lactam antibiotics. Interacts with E.coli beta-lactamases CTX-M-14 and CTX-M-15; interaction inhibits hydrolysis of beta-lactam antibiotics.

It localises to the secreted. Functionally, inhibits a wide variety of beta lactamases. The protein is Beta-lactamase inhibitory protein of Streptomyces clavuligerus.